A 752-amino-acid chain; its full sequence is Translation initiation factor IF-2 (752 aa).

Residues 148–159 (KKVKDKNKKEEP) show a composition bias toward basic and acidic residues. Residues 148–170 (KKVKDKNKKEEPAVTPSTAPRKK) form a disordered region. Residues 250–419 (PRPPIVTVMG…ALQAEIMELK (170 aa)) form the tr-type G domain. Residues 259–266 (GHVDHGKT) are G1. GTP is bound at residue 259–266 (GHVDHGKT). A G2 region spans residues 284–288 (GITQH). The interval 305-308 (DTPG) is G3. GTP contacts are provided by residues 305–309 (DTPGH) and 359–362 (NKID). A G4 region spans residues 359 to 362 (NKID). The interval 395–397 (SAK) is G5.

The protein belongs to the TRAFAC class translation factor GTPase superfamily. Classic translation factor GTPase family. IF-2 subfamily.

It is found in the cytoplasm. Functionally, one of the essential components for the initiation of protein synthesis. Protects formylmethionyl-tRNA from spontaneous hydrolysis and promotes its binding to the 30S ribosomal subunits. Also involved in the hydrolysis of GTP during the formation of the 70S ribosomal complex. In Thermodesulfovibrio yellowstonii (strain ATCC 51303 / DSM 11347 / YP87), this protein is Translation initiation factor IF-2.